Consider the following 335-residue polypeptide: Thioredoxin-related transmembrane protein 4 (335 aa).

A signal peptide spans 1-20; it reads MTGGFCVPVLLAAWLAAAAA. Residues 26–133 form the Thioredoxin domain; sequence AALPAEESRV…YEDLQNYILE (108 aa). Active-site nucleophile residues include Cys60 and Cys63. Cys60 and Cys63 are oxidised to a cystine. The helical transmembrane segment at 186–206 threads the bilayer; sequence VFFVIATLVFGLFMGLILVVI. Positions 222–316 are disordered; it reads CEQEQSTGEA…EDGAHPADTQ (95 aa). Residues 238–280 show a composition bias toward acidic residues; that stretch reads QDAEEEKDDSNEEENKDSLVDDEEEKEDIGDEDEGEEDEEEDN. Phosphoserine occurs at positions 247 and 255. Positions 286 to 298 are enriched in basic and acidic residues; it reads AEERSDTNERAVV.

Its subcellular location is the nucleus inner membrane. It localises to the endoplasmic reticulum membrane. The polypeptide is Thioredoxin-related transmembrane protein 4 (Tmx4) (Mus musculus (Mouse)).